We begin with the raw amino-acid sequence, 489 residues long: Blue-light-activated histidine kinase (489 aa).

The PAS domain occupies 19–93; sequence ATDPFRAAVE…AIKSAIAAEK (75 aa). Position 69 is an S-4a-FMN cysteine (cysteine 69). 2 consecutive PAC domains span residues 93-147 and 232-281; these read KPID…ELEK and YSIE…NKAL. An HWE histidine kinase domain region spans residues 259-341; sequence NPLVLGIVQD…LLKENWAGAT (83 aa). The residue at position 288 (histidine 288) is a Phosphohistidine; by autocatalysis.

FMN binds covalently to cysteine after exposure to blue light and this bond is spontaneously broken in the dark.

The catalysed reaction is ATP + protein L-histidine = ADP + protein N-phospho-L-histidine.. Functionally, photosensitive kinase that is involved in increased bacterial virulence upon exposure to light. Once ejected from an infected animal host, sunlight acts as an environmental signal that increases the virulence of the bacterium, preparing it for infection of the next host. This photoreceptor protein is directly related to the bacterium's survival and replication within host macrophages, as it is required for optimal replication of bacteria inside macrophages. The protein is Blue-light-activated histidine kinase of Brucella abortus (strain 2308).